The sequence spans 395 residues: Pyridinium-3,5-bisthiocarboxylic acid mononucleotide nickel insertion protein (395 aa).

The protein belongs to the LarC family.

The catalysed reaction is Ni(II)-pyridinium-3,5-bisthiocarboxylate mononucleotide = pyridinium-3,5-bisthiocarboxylate mononucleotide + Ni(2+). Its function is as follows. Involved in the biosynthesis of a nickel-pincer cofactor ((SCS)Ni(II) pincer complex). Binds Ni(2+), and functions in nickel delivery to pyridinium-3,5-bisthiocarboxylic acid mononucleotide (P2TMN), to form the mature cofactor. Is thus probably required for the activation of nickel-pincer cofactor-dependent enzymes. The sequence is that of Pyridinium-3,5-bisthiocarboxylic acid mononucleotide nickel insertion protein from Staphylococcus epidermidis (strain ATCC 35984 / DSM 28319 / BCRC 17069 / CCUG 31568 / BM 3577 / RP62A).